The primary structure comprises 109 residues: Large ribosomal subunit protein uL22 (109 aa).

The protein belongs to the universal ribosomal protein uL22 family. Part of the 50S ribosomal subunit.

This protein binds specifically to 23S rRNA; its binding is stimulated by other ribosomal proteins, e.g. L4, L17, and L20. It is important during the early stages of 50S assembly. It makes multiple contacts with different domains of the 23S rRNA in the assembled 50S subunit and ribosome. Its function is as follows. The globular domain of the protein is located near the polypeptide exit tunnel on the outside of the subunit, while an extended beta-hairpin is found that lines the wall of the exit tunnel in the center of the 70S ribosome. This is Large ribosomal subunit protein uL22 from Methylibium petroleiphilum (strain ATCC BAA-1232 / LMG 22953 / PM1).